Consider the following 351-residue polypeptide: Dihydroorotate dehydrogenase (quinone) (351 aa).

Residues 61-65 (AGLDK) and threonine 85 each bind FMN. Lysine 65 provides a ligand contact to substrate. 110 to 114 (NRMGF) lines the substrate pocket. FMN-binding residues include asparagine 139 and asparagine 172. Asparagine 172 contributes to the substrate binding site. Serine 175 (nucleophile) is an active-site residue. Residue asparagine 177 participates in substrate binding. The FMN site is built by lysine 217 and threonine 245. 246–247 (NT) contributes to the substrate binding site. FMN contacts are provided by residues glycine 268, glycine 297, and 318 to 319 (YT).

It belongs to the dihydroorotate dehydrogenase family. Type 2 subfamily. As to quaternary structure, monomer. Requires FMN as cofactor.

The protein localises to the cell membrane. The enzyme catalyses (S)-dihydroorotate + a quinone = orotate + a quinol. It functions in the pathway pyrimidine metabolism; UMP biosynthesis via de novo pathway; orotate from (S)-dihydroorotate (quinone route): step 1/1. Its function is as follows. Catalyzes the conversion of dihydroorotate to orotate with quinone as electron acceptor. This is Dihydroorotate dehydrogenase (quinone) from Xylella fastidiosa (strain M23).